We begin with the raw amino-acid sequence, 97 residues long: RxLR effector protein CRE10 (97 aa).

The N-terminal stretch at 1 to 21 (MRLSYILVVVIAVTLQACVCA) is a signal peptide. A RxLR-dEER motif is present at residues 48 to 66 (RLLRGVKKRTAEREVQEER).

This sequence belongs to the RxLR effector family.

Its subcellular location is the secreted. It is found in the host cell. Its function is as follows. Effector that is involved in host plant infection. Contributes to virulence during the early infection stage, by inhibiting plant defense responses induced by both PAMP-triggered immunity (PTI) and effector-triggered immunity (ETI). The polypeptide is RxLR effector protein CRE10 (Phytophthora infestans (strain T30-4) (Potato late blight agent)).